The following is a 284-amino-acid chain: 4-diphosphocytidyl-2-C-methyl-D-erythritol kinase (284 aa).

Lys14 is a catalytic residue. Pro98–Ser108 lines the ATP pocket. The active site involves Asp140.

The protein belongs to the GHMP kinase family. IspE subfamily.

It carries out the reaction 4-CDP-2-C-methyl-D-erythritol + ATP = 4-CDP-2-C-methyl-D-erythritol 2-phosphate + ADP + H(+). The protein operates within isoprenoid biosynthesis; isopentenyl diphosphate biosynthesis via DXP pathway; isopentenyl diphosphate from 1-deoxy-D-xylulose 5-phosphate: step 3/6. Functionally, catalyzes the phosphorylation of the position 2 hydroxy group of 4-diphosphocytidyl-2C-methyl-D-erythritol. The sequence is that of 4-diphosphocytidyl-2-C-methyl-D-erythritol kinase from Shewanella baltica (strain OS195).